A 292-amino-acid polypeptide reads, in one-letter code: Ribosomal RNA small subunit methyltransferase A (292 aa).

Residues Asn-46, Leu-48, Gly-73, Glu-94, Asp-118, and Asn-136 each coordinate S-adenosyl-L-methionine.

Belongs to the class I-like SAM-binding methyltransferase superfamily. rRNA adenine N(6)-methyltransferase family. RsmA subfamily.

The protein resides in the cytoplasm. The enzyme catalyses adenosine(1518)/adenosine(1519) in 16S rRNA + 4 S-adenosyl-L-methionine = N(6)-dimethyladenosine(1518)/N(6)-dimethyladenosine(1519) in 16S rRNA + 4 S-adenosyl-L-homocysteine + 4 H(+). Functionally, specifically dimethylates two adjacent adenosines (A1518 and A1519) in the loop of a conserved hairpin near the 3'-end of 16S rRNA in the 30S particle. May play a critical role in biogenesis of 30S subunits. The polypeptide is Ribosomal RNA small subunit methyltransferase A (Deinococcus radiodurans (strain ATCC 13939 / DSM 20539 / JCM 16871 / CCUG 27074 / LMG 4051 / NBRC 15346 / NCIMB 9279 / VKM B-1422 / R1)).